The primary structure comprises 509 residues: Putative ATP-dependent RNA helicase QP509L (509 aa).

A Helicase ATP-binding domain is found at K110–P262. An ATP-binding site is contributed by L123–T130. A DEAH box motif is present at residues D215–H218.

It belongs to the DEAD box helicase family. DEAH subfamily.

The catalysed reaction is ATP + H2O = ADP + phosphate + H(+). The chain is Putative ATP-dependent RNA helicase QP509L from African swine fever virus (strain Badajoz 1971 Vero-adapted) (Ba71V).